The sequence spans 393 residues: NADH-quinone oxidoreductase subunit D (393 aa).

It belongs to the complex I 49 kDa subunit family. In terms of assembly, NDH-1 is composed of 14 different subunits. Subunits NuoB, C, D, E, F, and G constitute the peripheral sector of the complex.

It localises to the cell inner membrane. It catalyses the reaction a quinone + NADH + 5 H(+)(in) = a quinol + NAD(+) + 4 H(+)(out). NDH-1 shuttles electrons from NADH, via FMN and iron-sulfur (Fe-S) centers, to quinones in the respiratory chain. The immediate electron acceptor for the enzyme in this species is believed to be ubiquinone. Couples the redox reaction to proton translocation (for every two electrons transferred, four hydrogen ions are translocated across the cytoplasmic membrane), and thus conserves the redox energy in a proton gradient. The sequence is that of NADH-quinone oxidoreductase subunit D from Ehrlichia canis (strain Jake).